The chain runs to 776 residues: DNA topoisomerase 1 (776 aa).

The region spanning M1–V111 is the Toprim domain. Positions 7 and 80 each coordinate Mg(2+). In terms of domain architecture, Topo IA-type catalytic spans D132–E568. The tract at residues S166–Q171 is interaction with DNA. The O-(5'-phospho-DNA)-tyrosine intermediate role is filled by Y304. The C4-type zinc finger occupies C600 to C627.

Belongs to the type IA topoisomerase family. Monomer. The cofactor is Mg(2+).

The catalysed reaction is ATP-independent breakage of single-stranded DNA, followed by passage and rejoining.. Functionally, releases the supercoiling and torsional tension of DNA, which is introduced during the DNA replication and transcription, by transiently cleaving and rejoining one strand of the DNA duplex. Introduces a single-strand break via transesterification at a target site in duplex DNA. The scissile phosphodiester is attacked by the catalytic tyrosine of the enzyme, resulting in the formation of a DNA-(5'-phosphotyrosyl)-enzyme intermediate and the expulsion of a 3'-OH DNA strand. The free DNA strand then undergoes passage around the unbroken strand, thus removing DNA supercoils. Finally, in the religation step, the DNA 3'-OH attacks the covalent intermediate to expel the active-site tyrosine and restore the DNA phosphodiester backbone. The chain is DNA topoisomerase 1 from Rickettsia prowazekii (strain Madrid E).